We begin with the raw amino-acid sequence, 430 residues long: 3-phosphoshikimate 1-carboxyvinyltransferase (430 aa).

Residues Lys-20, Ser-21, and Arg-25 each contribute to the 3-phosphoshikimate site. Position 20 (Lys-20) interacts with phosphoenolpyruvate. The phosphoenolpyruvate site is built by Gly-92 and Arg-120. Residues Ser-166, Gln-168, Asp-312, and Lys-339 each coordinate 3-phosphoshikimate. Position 168 (Gln-168) interacts with phosphoenolpyruvate. Asp-312 serves as the catalytic Proton acceptor. Phosphoenolpyruvate-binding residues include Arg-343 and Arg-387.

The protein belongs to the EPSP synthase family. In terms of assembly, monomer.

It localises to the cytoplasm. The enzyme catalyses 3-phosphoshikimate + phosphoenolpyruvate = 5-O-(1-carboxyvinyl)-3-phosphoshikimate + phosphate. It functions in the pathway metabolic intermediate biosynthesis; chorismate biosynthesis; chorismate from D-erythrose 4-phosphate and phosphoenolpyruvate: step 6/7. Catalyzes the transfer of the enolpyruvyl moiety of phosphoenolpyruvate (PEP) to the 5-hydroxyl of shikimate-3-phosphate (S3P) to produce enolpyruvyl shikimate-3-phosphate and inorganic phosphate. This chain is 3-phosphoshikimate 1-carboxyvinyltransferase, found in Lactococcus lactis subsp. cremoris (strain MG1363).